Reading from the N-terminus, the 116-residue chain is Large ribosomal subunit protein uL22c (116 aa).

It belongs to the universal ribosomal protein uL22 family. In terms of assembly, part of the 50S ribosomal subunit.

It is found in the plastid. The protein resides in the chloroplast. In terms of biological role, this protein binds specifically to 23S rRNA. Its function is as follows. The globular domain of the protein is located near the polypeptide exit tunnel on the outside of the subunit, while an extended beta-hairpin is found that lines the wall of the exit tunnel in the center of the 70S ribosome. The chain is Large ribosomal subunit protein uL22c (rpl22) from Euglena gracilis.